Reading from the N-terminus, the 367-residue chain is Epoxide hydrolase 3 (367 aa).

The helical transmembrane segment at 22–42 threads the bilayer; sequence ALVMSLVYLAALVAAFVYSCI. The active-site Nucleophile is the Asp-180. Residue Tyr-288 is the Proton donor of the active site. His-344 acts as the Proton acceptor in catalysis.

The protein belongs to the AB hydrolase superfamily. Epoxide hydrolase family. Predominantly expressed in skin, esophagus, lung and tongue and to a lesser extent in pancreas and eye.

It localises to the microsome membrane. The enzyme catalyses an epoxide + H2O = an ethanediol. It catalyses the reaction 9,10-epoxyoctadecanoate + H2O = 9,10-dihydroxyoctadecanoate. The catalysed reaction is 9,10-epoxy-(12Z)-octadecenoate + H2O = 9,10-dihydroxy-(12Z)-octadecenoate. It carries out the reaction 8,9-epoxy-(5Z,11Z,14Z)-eicosatrienoate + H2O = 8,9-dihydroxy-(5Z,11Z,14Z)-eicosatrienoate. The enzyme catalyses 11,12-epoxy-(5Z,8Z,14Z)-eicosatrienoate + H2O = 11,12-dihydroxy-(5Z,8Z,14Z)-eicosatrienoate. It catalyses the reaction 14,15-epoxy-(5Z,8Z,11Z)-eicosatrienoate + H2O = 14,15-dihydroxy-(5Z,8Z,11Z)-eicosatrienoate. With respect to regulation, inhibited by 1-(1-acetylpiperidin-4-yl)-3-(4-(trifl uoromethoxy)phenyl)urea (TPAU), 1-cyclohexyl-3-dodecylurea (CDU), 12-(3-adamantan-1-yl-ureido)-dodecanoic acid (AUDA), 1-((3S, 5S, 7S)-adamantan-1-yl)-3-(5-(2-(2-ethoxyethoxy) ethoxy)pentyl)urea (AEPU) and to a lesser extent by 8-(3-((3S, 5S, 7S)-adamantan-1-yl)ureido) octanoic acid (AUOA). In terms of biological role, catalyzes the hydrolysis of epoxide-containing fatty acids. Active in vitro against epoxyeicosatrienoic acids (EETs) including 8,9-EET, 9,10-EET, 11,12-EET and 14,15-EET and leukotoxin. This Mus musculus (Mouse) protein is Epoxide hydrolase 3 (Ephx3).